The sequence spans 139 residues: Large ribosomal subunit protein uL16 (139 aa).

Residues L74–V94 are disordered.

The protein belongs to the universal ribosomal protein uL16 family. In terms of assembly, part of the 50S ribosomal subunit.

Functionally, binds 23S rRNA and is also seen to make contacts with the A and possibly P site tRNAs. The polypeptide is Large ribosomal subunit protein uL16 (Saccharopolyspora erythraea (strain ATCC 11635 / DSM 40517 / JCM 4748 / NBRC 13426 / NCIMB 8594 / NRRL 2338)).